We begin with the raw amino-acid sequence, 252 residues long: 5'-nucleotidase SurE (252 aa).

A divalent metal cation-binding residues include Asp-8, Asp-9, Ser-40, and Asn-93.

The protein belongs to the SurE nucleotidase family. It depends on a divalent metal cation as a cofactor.

The protein localises to the cytoplasm. The catalysed reaction is a ribonucleoside 5'-phosphate + H2O = a ribonucleoside + phosphate. Its function is as follows. Nucleotidase that shows phosphatase activity on nucleoside 5'-monophosphates. The chain is 5'-nucleotidase SurE from Erythrobacter litoralis (strain HTCC2594).